The following is a 260-amino-acid chain: Indole-3-glycerol phosphate synthase (260 aa).

The protein belongs to the TrpC family.

The enzyme catalyses 1-(2-carboxyphenylamino)-1-deoxy-D-ribulose 5-phosphate + H(+) = (1S,2R)-1-C-(indol-3-yl)glycerol 3-phosphate + CO2 + H2O. The protein operates within amino-acid biosynthesis; L-tryptophan biosynthesis; L-tryptophan from chorismate: step 4/5. This Desulfotalea psychrophila (strain LSv54 / DSM 12343) protein is Indole-3-glycerol phosphate synthase.